Here is a 230-residue protein sequence, read N- to C-terminus: NAD(P)H-hydrate epimerase (230 aa).

Residues 11-218 (AIDVDQELFT…ALQRKYGLNL (208 aa)) enclose the YjeF N-terminal domain. 61 to 65 (NNGGD) contributes to the (6S)-NADPHX binding site. K(+) is bound by residues Asn-62 and Asp-126. Residues 130–136 (GFSFKPP) and Asp-159 each bind (6S)-NADPHX. Residue Ser-162 coordinates K(+).

Belongs to the NnrE/AIBP family. The cofactor is K(+).

The catalysed reaction is (6R)-NADHX = (6S)-NADHX. It catalyses the reaction (6R)-NADPHX = (6S)-NADPHX. Functionally, catalyzes the epimerization of the S- and R-forms of NAD(P)HX, a damaged form of NAD(P)H that is a result of enzymatic or heat-dependent hydration. This is a prerequisite for the S-specific NAD(P)H-hydrate dehydratase to allow the repair of both epimers of NAD(P)HX. This Drosophila yakuba (Fruit fly) protein is NAD(P)H-hydrate epimerase.